The chain runs to 280 residues: Hematopoietically-expressed homeobox protein HHEX homolog (280 aa).

2 disordered regions span residues 1-35 (MSTL…GLAP) and 221-280 (RRVK…EKEA). A DNA-binding region (homeobox) is located at residues 165-224 (RKGGQVRFSNDQTMELEKKFESQKYLSPPERKKLAKLLQLSERQVKTWFQNRRAKWRRVK). The span at 232 to 252 (GEGDENSHEKPRDLDRDDFSR) shows a compositional bias: basic and acidic residues.

The protein localises to the nucleus. Its function is as follows. Transcription factor that may play a central role in activating or maintaining gene expression in the vegetal pole. Part of a gene regulatory circuit with Erg and Tgif that operates early in mesoderm development. The chain is Hematopoietically-expressed homeobox protein HHEX homolog from Patiria miniata (Bat star).